The primary structure comprises 289 residues: 4-diphosphocytidyl-2-C-methyl-D-erythritol kinase (289 aa).

Residue Lys10 is part of the active site. Residue Pro94–Ser104 coordinates ATP. Asp136 is a catalytic residue.

The protein belongs to the GHMP kinase family. IspE subfamily.

It catalyses the reaction 4-CDP-2-C-methyl-D-erythritol + ATP = 4-CDP-2-C-methyl-D-erythritol 2-phosphate + ADP + H(+). Its pathway is isoprenoid biosynthesis; isopentenyl diphosphate biosynthesis via DXP pathway; isopentenyl diphosphate from 1-deoxy-D-xylulose 5-phosphate: step 3/6. Functionally, catalyzes the phosphorylation of the position 2 hydroxy group of 4-diphosphocytidyl-2C-methyl-D-erythritol. The polypeptide is 4-diphosphocytidyl-2-C-methyl-D-erythritol kinase (Geobacillus sp. (strain WCH70)).